The chain runs to 472 residues: Uronate isomerase (472 aa).

This sequence belongs to the metallo-dependent hydrolases superfamily. Uronate isomerase family.

It catalyses the reaction D-glucuronate = D-fructuronate. It carries out the reaction aldehydo-D-galacturonate = keto-D-tagaturonate. It participates in carbohydrate metabolism; pentose and glucuronate interconversion. The polypeptide is Uronate isomerase (Xanthomonas euvesicatoria pv. vesicatoria (strain 85-10) (Xanthomonas campestris pv. vesicatoria)).